A 758-amino-acid chain; its full sequence is Glucan endo-1,3-beta-D-glucosidase (758 aa).

A signal peptide (tat-type signal) is located at residues 1–34 (MSHASRRRWRRATTSAATAALLCGALLTFPSAPA). The segment at 38 to 251 (VRLGSGSYTT…SGYASVALLP (214 aa)) is beta-sandwich subdomain. Residues 38-704 (VRLGSGSYTT…QWLSTLAEFG (667 aa)) form the GH81 domain. The interval 252-342 (SPDDFDRYAP…EGDRFTTELT (91 aa)) is alpha/beta subdomain. A (alpha/beta)6 barrel subdomain region spans residues 352–704 (TVDSADHQRL…QWLSTLAEFG (353 aa)). (1,3-beta-D-glucosyl)n is bound by residues Tyr-382, Lys-386, Asp-457, His-461, Asn-532, Glu-534, and Glu-538. Asp-457 is a catalytic residue. Catalysis depends on residues Glu-534 and Glu-538.

The protein belongs to the glycosyl hydrolase 81 family. Post-translationally, predicted to be exported by the Tat system. The position of the signal peptide cleavage has not been experimentally proven.

It localises to the secreted. It carries out the reaction Hydrolysis of (1-&gt;3)-beta-D-glucosidic linkages in (1-&gt;3)-beta-D-glucans.. In terms of biological role, cleaves internal linkages in 1,3-beta-glucan. May contribute to biomass degradation by hydrolyzing the 1,3-beta-linked plant polymer callose that is present in decomposing plant tissue. The protein is Glucan endo-1,3-beta-D-glucosidase of Thermobifida fusca (strain YX).